A 298-amino-acid polypeptide reads, in one-letter code: ATP synthase gamma chain (298 aa).

This sequence belongs to the ATPase gamma chain family. F-type ATPases have 2 components, CF(1) - the catalytic core - and CF(0) - the membrane proton channel. CF(1) has five subunits: alpha(3), beta(3), gamma(1), delta(1), epsilon(1). CF(0) has three main subunits: a, b and c.

It is found in the cell inner membrane. Functionally, produces ATP from ADP in the presence of a proton gradient across the membrane. The gamma chain is believed to be important in regulating ATPase activity and the flow of protons through the CF(0) complex. The sequence is that of ATP synthase gamma chain from Francisella tularensis subsp. holarctica (strain LVS).